The sequence spans 200 residues: Probable GTP-binding protein EngB (200 aa).

An EngB-type G domain is found at 22–195 (GKDEIAFVGR…INNICSGINY (174 aa)). GTP contacts are provided by residues 30 to 37 (GRSNVGKS), 57 to 61 (GKTRL), 75 to 78 (DLPG), 142 to 145 (TKSD), and 174 to 176 (FSS). Mg(2+) contacts are provided by Ser-37 and Thr-59.

This sequence belongs to the TRAFAC class TrmE-Era-EngA-EngB-Septin-like GTPase superfamily. EngB GTPase family. Requires Mg(2+) as cofactor.

Necessary for normal cell division and for the maintenance of normal septation. This chain is Probable GTP-binding protein EngB, found in Clostridium acetobutylicum (strain ATCC 824 / DSM 792 / JCM 1419 / IAM 19013 / LMG 5710 / NBRC 13948 / NRRL B-527 / VKM B-1787 / 2291 / W).